Reading from the N-terminus, the 159-residue chain is Dynein 18 kDa light chain, flagellar outer arm (159 aa).

3 EF-hand domains span residues 18–53 (EEMD…LGQN), 54–89 (PTEE…NKQM), and 129–159 (ELTV…ALLS). Ca(2+) contacts are provided by Asp-31, Asp-33, Ser-35, Thr-37, Glu-42, Asp-67, Asp-69, Ser-71, Cys-73, and Glu-78.

As to quaternary structure, consists of at least 3 heavy chains (alpha, beta and gamma), 2 intermediate chains and 8 light chains.

The protein localises to the cell projection. It localises to the cilium. Its subcellular location is the flagellum. May be involved in the calcium-mediated regulation of dynein motor function. Binds 1 mole of calcium. In Chlamydomonas reinhardtii (Chlamydomonas smithii), this protein is Dynein 18 kDa light chain, flagellar outer arm.